We begin with the raw amino-acid sequence, 499 residues long: UDP-N-acetylmuramoylalanine--D-glutamate ligase (499 aa).

129–135 (GTNGKTT) provides a ligand contact to ATP.

It belongs to the MurCDEF family.

The protein localises to the cytoplasm. It carries out the reaction UDP-N-acetyl-alpha-D-muramoyl-L-alanine + D-glutamate + ATP = UDP-N-acetyl-alpha-D-muramoyl-L-alanyl-D-glutamate + ADP + phosphate + H(+). It participates in cell wall biogenesis; peptidoglycan biosynthesis. Cell wall formation. Catalyzes the addition of glutamate to the nucleotide precursor UDP-N-acetylmuramoyl-L-alanine (UMA). The polypeptide is UDP-N-acetylmuramoylalanine--D-glutamate ligase (Ralstonia nicotianae (strain ATCC BAA-1114 / GMI1000) (Ralstonia solanacearum)).